Here is a 498-residue protein sequence, read N- to C-terminus: Putative antiporter subunit mnhD2 (498 aa).

Helical transmembrane passes span Leu2–Phe22, Tyr32–Val52, Leu78–Phe98, Tyr108–Ser128, Leu130–Leu150, Ile161–Leu181, Ile209–Leu229, Leu240–Phe260, Ile271–Ile291, Ile308–Phe328, Leu330–Ile350, Phe369–Phe389, Ile406–Phe426, and Ile451–Asn471.

It belongs to the CPA3 antiporters (TC 2.A.63) subunit D family. As to quaternary structure, may form a heterooligomeric complex that consists of seven subunits: mnhA2, mnhB2, mnhC2, mnhD2, mnhE2, mnhF2 and mnhG2.

The protein localises to the cell membrane. This chain is Putative antiporter subunit mnhD2 (mnhD2), found in Staphylococcus aureus (strain Mu3 / ATCC 700698).